A 301-amino-acid polypeptide reads, in one-letter code: Probable 5-dehydro-4-deoxyglucarate dehydratase (301 aa).

Belongs to the DapA family.

The enzyme catalyses 5-dehydro-4-deoxy-D-glucarate + H(+) = 2,5-dioxopentanoate + CO2 + H2O. It functions in the pathway carbohydrate acid metabolism; D-glucarate degradation; 2,5-dioxopentanoate from D-glucarate: step 2/2. This Cereibacter sphaeroides (strain KD131 / KCTC 12085) (Rhodobacter sphaeroides) protein is Probable 5-dehydro-4-deoxyglucarate dehydratase.